A 123-amino-acid chain; its full sequence is Fluoride-specific ion channel FluC 1 (123 aa).

Transmembrane regions (helical) follow at residues 33–53 (TFLI…LFGV), 59–79 (YGTM…TTFS), and 98–118 (VFYL…GAML). Residues G73 and T76 each coordinate Na(+).

The protein belongs to the fluoride channel Fluc/FEX (TC 1.A.43) family.

It is found in the cell inner membrane. The catalysed reaction is fluoride(in) = fluoride(out). Its activity is regulated as follows. Na(+) is not transported, but it plays an essential structural role and its presence is essential for fluoride channel function. Functionally, fluoride-specific ion channel. Important for reducing fluoride concentration in the cell, thus reducing its toxicity. The polypeptide is Fluoride-specific ion channel FluC 1 (Brucella melitensis biotype 1 (strain ATCC 23456 / CCUG 17765 / NCTC 10094 / 16M)).